A 410-amino-acid polypeptide reads, in one-letter code: uncharacterized protein (410 aa).

11–39 (VLVIGGGPSGTALSAELAARGLDVQQLAP) contacts NAD(+).

It belongs to the lycopene cyclase family.

This is an uncharacterized protein from Deinococcus radiodurans (strain ATCC 13939 / DSM 20539 / JCM 16871 / CCUG 27074 / LMG 4051 / NBRC 15346 / NCIMB 9279 / VKM B-1422 / R1).